A 505-amino-acid chain; its full sequence is MNLILDMIDISTPVILLNDTDARQIGVLEGDRVTITRIKTKHTIAAPVSITKTLTSQGTATISLGTNENLAAEKGDEIEIRAAPRPASIAFIRKKMDGGKFTREETATIISDMSSNVLSPSEITAYITAAYINGLDMDEVEFLTREMVASGEQITFSKKPVVDKHSIGGVPGNKITLLVVPVIAASGLLIPKTSSRAITGAGGTADLMEALAPVAFSAAEIKTMTEKAGGVIVWGGATNIAPADDMIVTYEYPLKIDARGQMLASIMAKKMAVGSDTCVIDIPIGPGTKIPDEAEGRVLANELITLGNRLGIRVECAVTFGGSPIGRNIGVNLEVSEALSLLEGKRGANSLVQKSVAIAGIALEMTGKTGADSGAEAAYDIIKKGKALKKMLDIIEIQGGDPKVKSTDFPVGEHTFVVPAASDGYVVSVKNQALISIARAAGSPVDHGAGLHLHKKPGEYVKRGEPLLTIYAERGWRLTRAIEEARTSYPVLVEGMLLERISSNR.

Residues Gly-169, 195 to 200 (SRAITG), and Thr-204 each bind AMP. Residue Asp-257 is the Proton donor of the active site. Positions 265 and 289 each coordinate AMP.

It belongs to the thymidine/pyrimidine-nucleoside phosphorylase family. Type 2 subfamily.

The enzyme catalyses AMP + phosphate = alpha-D-ribose 1,5-bisphosphate + adenine. It carries out the reaction CMP + phosphate = cytosine + alpha-D-ribose 1,5-bisphosphate. It catalyses the reaction UMP + phosphate = alpha-D-ribose 1,5-bisphosphate + uracil. Its function is as follows. Catalyzes the conversion of AMP and phosphate to adenine and ribose 1,5-bisphosphate (R15P). Exhibits phosphorylase activity toward CMP and UMP in addition to AMP. Functions in an archaeal AMP degradation pathway, together with R15P isomerase and RubisCO. In Methanocorpusculum labreanum (strain ATCC 43576 / DSM 4855 / Z), this protein is AMP phosphorylase.